The chain runs to 155 residues: Small ribosomal subunit protein uS7 (155 aa).

The protein belongs to the universal ribosomal protein uS7 family. Part of the 30S ribosomal subunit. Contacts proteins S9 and S11.

Functionally, one of the primary rRNA binding proteins, it binds directly to 16S rRNA where it nucleates assembly of the head domain of the 30S subunit. Is located at the subunit interface close to the decoding center, probably blocks exit of the E-site tRNA. In Fervidobacterium nodosum (strain ATCC 35602 / DSM 5306 / Rt17-B1), this protein is Small ribosomal subunit protein uS7.